The chain runs to 428 residues: Hercynine oxygenase (428 aa).

His46 is a Fe cation binding site. 82–85 (RASR) lines the gamma-L-glutamyl-L-cysteine pocket. Residues His129 and His133 each contribute to the Fe cation site. Gamma-L-glutamyl-L-cysteine-binding residues include Asp411 and Arg415.

This sequence belongs to the EgtB family. In terms of assembly, monomer. It depends on Fe(2+) as a cofactor.

It carries out the reaction gamma-L-glutamyl-L-cysteine + hercynine + O2 = gamma-L-glutamyl-hercynylcysteine S-oxide + H2O. It participates in amino-acid biosynthesis; ergothioneine biosynthesis. Its function is as follows. Catalyzes the oxidative sulfurization of hercynine (N-alpha,N-alpha,N-alpha-trimethyl-L-histidine) into hercynyl-gamma-L-glutamyl-L-cysteine sulfoxide, a step in the biosynthesis pathway of ergothioneine. Cannot use the alternative thiols cysteine, N-acetylcysteine, or glutathione instead of gamma-glutamylcysteine as substrates, and histidine is a poor sulfur acceptor substrate compared to hercynine. In Mycolicibacterium smegmatis (strain ATCC 700084 / mc(2)155) (Mycobacterium smegmatis), this protein is Hercynine oxygenase.